We begin with the raw amino-acid sequence, 860 residues long: DNA mismatch repair protein MutS (860 aa).

608 to 615 is an ATP binding site; the sequence is GPNMAGKS.

Belongs to the DNA mismatch repair MutS family.

Its function is as follows. This protein is involved in the repair of mismatches in DNA. It is possible that it carries out the mismatch recognition step. This protein has a weak ATPase activity. This chain is DNA mismatch repair protein MutS, found in Borrelia turicatae (strain 91E135).